A 202-amino-acid chain; its full sequence is MENLIIYAFIYLLGSIPFGLILAKFFAKTDIKKEGSKSIGATNVLRVVKEKNPKLAKKLAIATIILDFAKAAIPLLILKFLHYDQALLWSVAVLAIFGHCFSIYLLFEGGKGIATGAGAMIVLLPLEVLTAFIVWVVIGKIFKISSLASLAALLAFVISSFIFNYDLEIHTHAPVFIIAFIIVYKHLPNIKRLIFKEECKVI.

The next 6 membrane-spanning stretches (helical) occupy residues 3-23 (NLIIYAFIYLLGSIPFGLILA), 61-81 (IATIILDFAKAAIPLLILKFL), 87-107 (LLWSVAVLAIFGHCFSIYLLF), 118-138 (GAMIVLLPLEVLTAFIVWVVI), 144-164 (ISSLASLAALLAFVISSFIFN), and 167-187 (LEIHTHAPVFIIAFIIVYKHL).

Belongs to the PlsY family. Probably interacts with PlsX.

Its subcellular location is the cell inner membrane. It catalyses the reaction an acyl phosphate + sn-glycerol 3-phosphate = a 1-acyl-sn-glycero-3-phosphate + phosphate. It functions in the pathway lipid metabolism; phospholipid metabolism. In terms of biological role, catalyzes the transfer of an acyl group from acyl-phosphate (acyl-PO(4)) to glycerol-3-phosphate (G3P) to form lysophosphatidic acid (LPA). This enzyme utilizes acyl-phosphate as fatty acyl donor, but not acyl-CoA or acyl-ACP. The protein is Glycerol-3-phosphate acyltransferase of Campylobacter jejuni subsp. jejuni serotype O:6 (strain 81116 / NCTC 11828).